The primary structure comprises 432 residues: Proline--tRNA ligase (432 aa).

This sequence belongs to the class-II aminoacyl-tRNA synthetase family. ProS type 2 subfamily. As to quaternary structure, homodimer.

The protein resides in the cytoplasm. It carries out the reaction tRNA(Pro) + L-proline + ATP = L-prolyl-tRNA(Pro) + AMP + diphosphate. Catalyzes the attachment of proline to tRNA(Pro) in a two-step reaction: proline is first activated by ATP to form Pro-AMP and then transferred to the acceptor end of tRNA(Pro). In Rickettsia bellii (strain OSU 85-389), this protein is Proline--tRNA ligase.